Consider the following 315-residue polypeptide: DNA-directed RNA polymerase subunit alpha (315 aa).

The interval 1–228 (MLEIEKPVIQ…EHFKLFMTLT (228 aa)) is alpha N-terminal domain (alpha-NTD). The interval 245–315 (KEKALEMTIE…LGLNLRLNDE (71 aa)) is alpha C-terminal domain (alpha-CTD).

The protein belongs to the RNA polymerase alpha chain family. Homodimer. The RNAP catalytic core consists of 2 alpha, 1 beta, 1 beta' and 1 omega subunit. When a sigma factor is associated with the core the holoenzyme is formed, which can initiate transcription.

The enzyme catalyses RNA(n) + a ribonucleoside 5'-triphosphate = RNA(n+1) + diphosphate. In terms of biological role, DNA-dependent RNA polymerase catalyzes the transcription of DNA into RNA using the four ribonucleoside triphosphates as substrates. This chain is DNA-directed RNA polymerase subunit alpha, found in Clostridium perfringens (strain ATCC 13124 / DSM 756 / JCM 1290 / NCIMB 6125 / NCTC 8237 / Type A).